The primary structure comprises 455 residues: Bifunctional protein GlmU (455 aa).

Positions Met1–Arg226 are pyrophosphorylase. Residues Leu8 to Gly11, Lys22, Gln73, Gly78 to Thr79, Tyr99 to Asp101, Gly136, Glu151, Asn166, and Asn224 each bind UDP-N-acetyl-alpha-D-glucosamine. Asp101 provides a ligand contact to Mg(2+). Asn224 lines the Mg(2+) pocket. The tract at residues Lys227–Gly247 is linker. Positions Gly248–Asp455 are N-acetyltransferase. The UDP-N-acetyl-alpha-D-glucosamine site is built by Arg330 and Lys348. The Proton acceptor role is filled by His360. Residues Tyr363 and Asn374 each coordinate UDP-N-acetyl-alpha-D-glucosamine. Acetyl-CoA-binding positions include Ala377, Asn383–Tyr384, Ser402, Ala420, and Arg437.

It in the N-terminal section; belongs to the N-acetylglucosamine-1-phosphate uridyltransferase family. The protein in the C-terminal section; belongs to the transferase hexapeptide repeat family. Homotrimer. Requires Mg(2+) as cofactor.

The protein localises to the cytoplasm. The catalysed reaction is alpha-D-glucosamine 1-phosphate + acetyl-CoA = N-acetyl-alpha-D-glucosamine 1-phosphate + CoA + H(+). The enzyme catalyses N-acetyl-alpha-D-glucosamine 1-phosphate + UTP + H(+) = UDP-N-acetyl-alpha-D-glucosamine + diphosphate. The protein operates within nucleotide-sugar biosynthesis; UDP-N-acetyl-alpha-D-glucosamine biosynthesis; N-acetyl-alpha-D-glucosamine 1-phosphate from alpha-D-glucosamine 6-phosphate (route II): step 2/2. It participates in nucleotide-sugar biosynthesis; UDP-N-acetyl-alpha-D-glucosamine biosynthesis; UDP-N-acetyl-alpha-D-glucosamine from N-acetyl-alpha-D-glucosamine 1-phosphate: step 1/1. Its pathway is bacterial outer membrane biogenesis; LPS lipid A biosynthesis. Its function is as follows. Catalyzes the last two sequential reactions in the de novo biosynthetic pathway for UDP-N-acetylglucosamine (UDP-GlcNAc). The C-terminal domain catalyzes the transfer of acetyl group from acetyl coenzyme A to glucosamine-1-phosphate (GlcN-1-P) to produce N-acetylglucosamine-1-phosphate (GlcNAc-1-P), which is converted into UDP-GlcNAc by the transfer of uridine 5-monophosphate (from uridine 5-triphosphate), a reaction catalyzed by the N-terminal domain. The polypeptide is Bifunctional protein GlmU (Pseudomonas savastanoi pv. phaseolicola (strain 1448A / Race 6) (Pseudomonas syringae pv. phaseolicola (strain 1448A / Race 6))).